The sequence spans 868 residues: DNA topoisomerase 1 (868 aa).

The 146-residue stretch at 3–148 (KSLVIVESPA…RFSRVVFNEI (146 aa)) folds into the Toprim domain. Mg(2+) is bound by residues Glu9 and Asp117. A Topo IA-type catalytic domain is found at 164–581 (NLDRVNAQQT…QFFKDFSQQL (418 aa)). Positions 198-203 (SAGRVQ) are interaction with DNA. Tyr325 serves as the catalytic O-(5'-phospho-DNA)-tyrosine intermediate. C4-type zinc fingers lie at residues 605–636 (CPTCGRKMAIRTASTGVFLGCSGYALPPKERC), 667–694 (CPKCGTAMDSYLIDPERKIHICGHNPNC), and 716–739 (CDKCGADMHLKLGRFGKYMGCTSC).

Belongs to the type IA topoisomerase family. In terms of assembly, monomer. Requires Mg(2+) as cofactor.

The catalysed reaction is ATP-independent breakage of single-stranded DNA, followed by passage and rejoining.. Functionally, releases the supercoiling and torsional tension of DNA, which is introduced during the DNA replication and transcription, by transiently cleaving and rejoining one strand of the DNA duplex. Introduces a single-strand break via transesterification at a target site in duplex DNA. The scissile phosphodiester is attacked by the catalytic tyrosine of the enzyme, resulting in the formation of a DNA-(5'-phosphotyrosyl)-enzyme intermediate and the expulsion of a 3'-OH DNA strand. The free DNA strand then undergoes passage around the unbroken strand, thus removing DNA supercoils. Finally, in the religation step, the DNA 3'-OH attacks the covalent intermediate to expel the active-site tyrosine and restore the DNA phosphodiester backbone. The sequence is that of DNA topoisomerase 1 from Pasteurella multocida (strain Pm70).